We begin with the raw amino-acid sequence, 181 residues long: MVQRLKTVYEQEVIKQLMTRFQYKNIHEVPKLKKITVNRGLGEAAQNAKILEASVKEITEITGQKAIVTRAKKAIAGFKLRQDMPIGVMVTLRGDYMYAFLDRLINLSLPRIRDFRGITAKSFDGRGNYNLGLKEQLIFPEVDYDGIEQIRGMDISIVTTAKTDQEGLALLKSLGMPFAES.

This sequence belongs to the universal ribosomal protein uL5 family. Part of the 50S ribosomal subunit; contacts the 5S rRNA.

It localises to the plastid. The protein resides in the cyanelle. Binds 5S rRNA, forms part of the central protuberance of the 50S subunit. In Cyanophora paradoxa, this protein is Large ribosomal subunit protein uL5c (rpl5).